A 60-amino-acid chain; its full sequence is Large ribosomal subunit protein bL32 (60 aa).

This sequence belongs to the bacterial ribosomal protein bL32 family.

In Streptococcus sanguinis (strain SK36), this protein is Large ribosomal subunit protein bL32.